Consider the following 629-residue polypeptide: RNA polymerase sigma factor RpoD (629 aa).

A disordered region spans residues 183–228 (HNGLDEDFSDEDDEEESSNADVEDNEDEEDNESESTSDSSDSDNSI). A compositionally biased stretch (acidic residues) spans 187–228 (DEDFSDEDDEEESSNADVEDNEDEEDNESESTSDSSDSDNSI). A sigma-70 factor domain-2 region spans residues 395 to 465 (MVEANLRLVI…TRSIADQART (71 aa)). An Interaction with polymerase core subunit RpoC motif is present at residues 419–422 (DLIQ). Residues 474-550 (ETINKLNRIS…DSTLELPLDS (77 aa)) form a sigma-70 factor domain-3 region. The tract at residues 563 to 616 (VLEGLTPREAKVLRMRFGIDMNTDHTLEEVGKQFDVTRERIRQIEAKALRKLRH) is sigma-70 factor domain-4. The segment at residues 589–608 (LEEVGKQFDVTRERIRQIEA) is a DNA-binding region (H-T-H motif).

This sequence belongs to the sigma-70 factor family. RpoD/SigA subfamily. In terms of assembly, interacts transiently with the RNA polymerase catalytic core.

Its subcellular location is the cytoplasm. In terms of biological role, sigma factors are initiation factors that promote the attachment of RNA polymerase to specific initiation sites and are then released. This sigma factor is the primary sigma factor during exponential growth. The chain is RNA polymerase sigma factor RpoD from Haemophilus influenzae (strain ATCC 51907 / DSM 11121 / KW20 / Rd).